The chain runs to 282 residues: Succinate dehydrogenase [ubiquinone] iron-sulfur subunit, mitochondrial (282 aa).

The transit peptide at 1-30 directs the protein to the mitochondrion; the sequence is MAATVGVSLKRGFPAAVLGRVGLQFQACRG. A 2Fe-2S ferredoxin-type domain is found at 42–135; the sequence is KKFAIYRWDP…VSKIYPLPHM (94 aa). An N6-acetyllysine mark is found at lysine 53 and lysine 57. [2Fe-2S] cluster-binding residues include cysteine 95, cysteine 100, cysteine 103, and cysteine 115. The tract at residues 148 to 220 is interaction with SDHAF1; sequence FYAQYKSIEP…PAVLMQAYRW (73 aa). The region spanning 178-208 is the 4Fe-4S ferredoxin-type domain; that stretch reads DREKLDGLYECILCACCSTSCPSYWWNGDKY. Residues cysteine 188, cysteine 191, and cysteine 194 each coordinate [4Fe-4S] cluster. Cysteine 198 serves as a coordination point for [3Fe-4S] cluster. Tryptophan 203 serves as a coordination point for a ubiquinone. Residues cysteine 245 and cysteine 251 each coordinate [3Fe-4S] cluster. Cysteine 255 serves as a coordination point for [4Fe-4S] cluster.

Belongs to the succinate dehydrogenase/fumarate reductase iron-sulfur protein family. Component of complex II composed of four subunits: the flavoprotein (FP) SDHA, iron-sulfur protein (IP) SDHB, and a cytochrome b560 composed of SDHC and SDHD. Interacts with SDHAF1; the interaction is required for iron-sulfur cluster incorporation into SDHB. It depends on [2Fe-2S] cluster as a cofactor. [3Fe-4S] cluster is required as a cofactor. Requires [4Fe-4S] cluster as cofactor.

It localises to the mitochondrion inner membrane. It carries out the reaction a quinone + succinate = fumarate + a quinol. The enzyme catalyses (R)-malate + a quinone = enol-oxaloacetate + a quinol. It catalyses the reaction (S)-malate + a quinone = enol-oxaloacetate + a quinol. It participates in carbohydrate metabolism; tricarboxylic acid cycle; fumarate from succinate (eukaryal route): step 1/1. With respect to regulation, enol-oxaloacetate inhibits the succinate dehydrogenase activity. Iron-sulfur protein (IP) subunit of the succinate dehydrogenase complex (mitochondrial respiratory chain complex II), responsible for transferring electrons from succinate to ubiquinone (coenzyme Q). SDH also oxidizes malate to the non-canonical enol form of oxaloacetate, enol-oxaloacetate. Enol-oxaloacetate, which is a potent inhibitor of the succinate dehydrogenase activity, is further isomerized into keto-oxaloacetate. This chain is Succinate dehydrogenase [ubiquinone] iron-sulfur subunit, mitochondrial (Sdhb), found in Mus musculus (Mouse).